The sequence spans 404 residues: Spore development regulator RYP2 (404 aa).

Disordered regions lie at residues 1–46 (MSAP…RKAV), 200–231 (LLKRPLNRAEPDYPAPPTQPRTPERSGASSQQ), and 382–404 (SGQSFSQSAGHMQSPSQVPPAWG). The Velvet domain maps to 17–194 (LQSADFRLTV…ADQGVKLRIR (178 aa)). Residues 29-46 (NPERARVAGGKEKERKAV) are compositionally biased toward basic and acidic residues. Residues 382–397 (SGQSFSQSAGHMQSPS) are compositionally biased toward polar residues.

It belongs to the velvet family. VosA subfamily. As to quaternary structure, forms a heterodimeric complex with RYP3; the formation of the RYP2-RYP3 complex is light-dependent.

The protein localises to the nucleus. Its function is as follows. Component of the RYP2-RYP3 heterodimeric complex that plays a dual role in activating genes associated with spore maturation and repressing certain development-associated genes. The complex binds DNA through the DNA-binding domain of vosA that recognizes an 11-nucleotide consensus sequence 5'-CTGGCCGCGGC-3' consisting of two motifs in the promoters of key developmental regulatory genes. Required for viable spore production and regulation of sporulation in response to temperature and for the switch to yeast-form in the presence of host cells. This Ajellomyces capsulatus (Darling's disease fungus) protein is Spore development regulator RYP2.